The chain runs to 243 residues: ATP synthase subunit a (243 aa).

Helical transmembrane passes span 28-48 (SSLY…AGVF), 52-72 (VIPG…LGII), 83-103 (YFPL…VGML), 114-134 (HIVV…LIGL), 141-161 (FFAM…MIFL), 177-197 (LTAN…FVYP), 200-220 (LLIS…EVFI), and 221-241 (AMLQ…DSLF).

It belongs to the ATPase A chain family. F-type ATPases have 2 components, CF(1) - the catalytic core - and CF(0) - the membrane proton channel. CF(1) has five subunits: alpha(3), beta(3), gamma(1), delta(1), epsilon(1). CF(0) has three main subunits: a(1), b(2) and c(9-12). The alpha and beta chains form an alternating ring which encloses part of the gamma chain. CF(1) is attached to CF(0) by a central stalk formed by the gamma and epsilon chains, while a peripheral stalk is formed by the delta and b chains.

It localises to the cell inner membrane. Functionally, key component of the proton channel; it plays a direct role in the translocation of protons across the membrane. The protein is ATP synthase subunit a of Neorickettsia sennetsu (strain ATCC VR-367 / Miyayama) (Ehrlichia sennetsu).